The primary structure comprises 319 residues: Vesicle-associated membrane protein-associated protein scs22 (319 aa).

The region spanning 1 to 121 (MALECDSTIV…SERKIRCVYS (121 aa)) is the MSP domain. Residues 1–298 (MALECDSTIV…GAKVVPQIHN (298 aa)) lie on the Cytoplasmic side of the membrane. Positions 127-150 (ANAHANAHHQPAQTTTTSIPTSAT) are enriched in low complexity. The interval 127–244 (ANAHANAHHQ…TTSPNNENNA (118 aa)) is disordered. 3 stretches are compositionally biased toward polar residues: residues 151–165 (DNYTTVNGNVNQSYS), 185–201 (STATTQHTQLPKTSAVS), and 231–244 (SVPTTTSPNNENNA). Residue T236 is modified to Phosphothreonine. Phosphoserine occurs at positions 237 and 281. Residues 299–319 (TVTVQTAFLLAIICFLIGLLF) traverse the membrane as a helical; Anchor for type IV membrane protein segment.

It belongs to the VAMP-associated protein (VAP) (TC 9.B.17) family. Interacts with epr1.

The protein localises to the endoplasmic reticulum membrane. Vesicle-associated membrane protein-associated protein (VAP) implicated in maintaining the cortical endoplasmic reticulum (ER)-plasma membrane (PM) attachment. ER-PM contacts function to modulate the distribution of contractile ring components to ensure robust ring assembly. ER-PM contacts function also in controlling exocytosis and maintenance of cell polarity regulating cell shape. VAPs play an important role in regulating eisosome assembly. VAPs also contribute to ER-phagy by tethering atg8 to the ER membrane, but also by maintaining the ER-plasma membrane contact. The polypeptide is Vesicle-associated membrane protein-associated protein scs22 (scs22) (Schizosaccharomyces pombe (strain 972 / ATCC 24843) (Fission yeast)).